The chain runs to 71 residues: Antitoxin ParD2 (71 aa).

Antitoxin component of a type II toxin-antitoxin (TA) system. This Mycobacterium tuberculosis (strain CDC 1551 / Oshkosh) protein is Antitoxin ParD2 (parD2).